We begin with the raw amino-acid sequence, 321 residues long: MYRLLSVASVPLLASLVHGYADPGACSGVCTTHDPGLIRRESDGTYFLFSTGNKISYVSASSIEGPWTSVGSMLPDGSSIDLDGNDDLWAPDVSYVDGLYYVYYAVSTFGSQDSAIGLATSETMEYGSWTDHGSTGIASSSAKIYNAIDPNLIYADGTYYINFGSFWDDIYQVPMKSTPTAAASSSYNLAYDPSGTHAEEGSYMFQYGDYYYLFYSAGICCGYDTSMPASGEEYHIKVCRSTSPTGDFVDSDGTACTDGGGTMVLESHGEVYGPGGQGVYDDPNLGPVLYYHYMNTTIGYADSDAQFGWNTIDFSSGWPVV.

The first 19 residues, Met-1–Gly-19, serve as a signal peptide directing secretion. Asp-34 (proton acceptor) is an active-site residue. Glu-200 acts as the Proton donor in catalysis. N-linked (GlcNAc...) asparagine glycosylation is present at Asn-295.

Belongs to the glycosyl hydrolase 43 family.

The protein localises to the secreted. It catalyses the reaction Endohydrolysis of (1-&gt;5)-alpha-arabinofuranosidic linkages in (1-&gt;5)-arabinans.. Its pathway is glycan metabolism; L-arabinan degradation. Its function is as follows. Endo-1,5-alpha-L-arabinanase involved in degradation of pectin. Its preferred substrate is linear 1,5-alpha-L-arabinan. The sequence is that of Probable arabinan endo-1,5-alpha-L-arabinosidase A (abnA) from Aspergillus niger (strain ATCC MYA-4892 / CBS 513.88 / FGSC A1513).